The sequence spans 244 residues: Chalcone--flavanone isomerase (244 aa).

Residues Thr45, Asn110, and Ser187 each contribute to the substrate site.

The protein belongs to the chalcone isomerase family.

It catalyses the reaction a chalcone = a flavanone.. It functions in the pathway secondary metabolite biosynthesis; flavonoid biosynthesis. Its function is as follows. Catalyzes the intramolecular cyclization of bicyclic chalcones into tricyclic (S)-flavanones. Responsible for the isomerization of 4,2',4',6'-tetrahydroxychalcone (also termed chalcone) into naringenin. This Nicotiana tabacum (Common tobacco) protein is Chalcone--flavanone isomerase (CHI).